A 92-amino-acid polypeptide reads, in one-letter code: Calitoxin (92 aa).

The signal sequence occupies residues 1–20 (MKTQVLVVLVLCVVFCLAES). Residues 21-42 (RNSMTSEERGLVSLMRQRDDIA) constitute a propeptide that is removed on maturation. Cystine bridges form between C47/C86, C49/C77, and C67/C87.

Belongs to the sea anemone sodium channel inhibitory toxin family. In terms of tissue distribution, expressed both outside and in acontia, a specialised envenomation structure laden with batteries of venom-containing nematocysts found only in the superfamily Metridioidea.

It is found in the secreted. It localises to the nematocyst. In terms of biological role, in neuromuscular preparation of crustaceans, the toxin increased neurotransmitter release, causing repetitive firing of the axons. May affect sodium channels (Nav). The sequence is that of Calitoxin from Calliactis polypus (Hermit crab anemone).